The sequence spans 124 residues: Probable cytochrome b5 1 (124 aa).

A Cytochrome b5 heme-binding domain is found at V3–K79. Residues H38 and H62 each contribute to the heme site. A helical membrane pass occupies residues P100–V120.

This sequence belongs to the cytochrome b5 family.

The protein localises to the endoplasmic reticulum membrane. It localises to the microsome membrane. In terms of biological role, membrane bound hemoprotein which function as an electron carrier for several membrane bound oxygenases. This chain is Probable cytochrome b5 1, found in Schizosaccharomyces pombe (strain 972 / ATCC 24843) (Fission yeast).